The chain runs to 629 residues: tRNA uridine 5-carboxymethylaminomethyl modification enzyme MnmG (629 aa).

11–16 serves as a coordination point for FAD; the sequence is GGGHAG. 273–287 contributes to the NAD(+) binding site; sequence GPRYCPSFEDKVVRF.

Belongs to the MnmG family. As to quaternary structure, homodimer. Heterotetramer of two MnmE and two MnmG subunits. The cofactor is FAD.

The protein resides in the cytoplasm. Functionally, NAD-binding protein involved in the addition of a carboxymethylaminomethyl (cmnm) group at the wobble position (U34) of certain tRNAs, forming tRNA-cmnm(5)s(2)U34. This is tRNA uridine 5-carboxymethylaminomethyl modification enzyme MnmG from Mycoplasma capricolum subsp. capricolum (strain California kid / ATCC 27343 / NCTC 10154).